The primary structure comprises 446 residues: C-type lectin domain family 18 member A (446 aa).

Residues 1–26 (MLHPETSPGRGHLLAVLLALLGTAWA) form the signal peptide. The SCP domain occupies 52 to 182 (LSLHNRLRSW…AAIEAFVCAY (131 aa)). The N-linked (GlcNAc...) asparagine glycan is linked to asparagine 144. In terms of domain architecture, EGF-like spans 228–261 (PRNPCRMSCQNHGRLNISTCHCHCPPGYTGRYCQ). 4 cysteine pairs are disulfide-bonded: cysteine 236–cysteine 249, cysteine 251–cysteine 260, cysteine 327–cysteine 432, and cysteine 408–cysteine 424. The 128-residue stretch at 306–433 (IDGDCFMVSS…CKTRNRYICQ (128 aa)) folds into the C-type lectin domain.

In terms of processing, N-glycosylated. Dectected in all cell lines tested and in peripheral blood cells.

It localises to the secreted. The protein resides in the endoplasmic reticulum. Its subcellular location is the golgi apparatus. It is found in the endosome. Functionally, binds polysaccharides in a Ca(2+)-independent manner with a preferentially binding to fucoidan, beta-glucans and galactans. This chain is C-type lectin domain family 18 member A (CLEC18A), found in Homo sapiens (Human).